The following is a 212-amino-acid chain: uncharacterized protein (212 aa).

2 disordered regions span residues 1–25 (MARK…GRPN) and 165–212 (STSG…HWGG). A compositionally biased stretch (low complexity) spans 202–212 (RSSSARGHWGG).

This is an uncharacterized protein from Escherichia coli (strain K12).